The primary structure comprises 432 residues: Serine--tRNA ligase (432 aa).

L-serine is bound at residue 236–238; the sequence is TSE. 267–269 contacts ATP; that stretch reads RSE. Residue E290 participates in L-serine binding. 354–357 lines the ATP pocket; the sequence is EISS. S390 is an L-serine binding site.

The protein belongs to the class-II aminoacyl-tRNA synthetase family. Type-1 seryl-tRNA synthetase subfamily. Homodimer. The tRNA molecule binds across the dimer.

It is found in the cytoplasm. The enzyme catalyses tRNA(Ser) + L-serine + ATP = L-seryl-tRNA(Ser) + AMP + diphosphate + H(+). It catalyses the reaction tRNA(Sec) + L-serine + ATP = L-seryl-tRNA(Sec) + AMP + diphosphate + H(+). It functions in the pathway aminoacyl-tRNA biosynthesis; selenocysteinyl-tRNA(Sec) biosynthesis; L-seryl-tRNA(Sec) from L-serine and tRNA(Sec): step 1/1. Catalyzes the attachment of serine to tRNA(Ser). Is also able to aminoacylate tRNA(Sec) with serine, to form the misacylated tRNA L-seryl-tRNA(Sec), which will be further converted into selenocysteinyl-tRNA(Sec). The sequence is that of Serine--tRNA ligase from Pseudoalteromonas atlantica (strain T6c / ATCC BAA-1087).